Reading from the N-terminus, the 518-residue chain is U3 small nucleolar RNA-associated protein 15 homolog (518 aa).

The residue at position 2 (Ala2) is an N-acetylalanine. WD repeat units lie at residues 36 to 75, 78 to 117, 120 to 159, 162 to 202, 204 to 242, 246 to 285, and 287 to 326; these read KEFG…PIKT, RFKD…PLRQ, GHTK…EILT, EHSD…SVLS, EHGQ…QLLV, NHHK…VVHS, and DYAA…KKES. Lys249 is covalently cross-linked (Glycyl lysine isopeptide (Lys-Gly) (interchain with G-Cter in SUMO2)).

In terms of assembly, part of the small subunit (SSU) processome, composed of more than 70 proteins and the RNA chaperone small nucleolar RNA (snoRNA) U3. May be a component of the proposed t-UTP subcomplex of the ribosomal small subunit (SSU) processome containing at least UTP4, WDR43, HEATR1, UTP15, WDR75. Interacts directly with UTP4 and WDR43.

The protein localises to the nucleus. It localises to the nucleolus. In terms of biological role, ribosome biogenesis factor. Involved in nucleolar processing of pre-18S ribosomal RNA. Required for optimal pre-ribosomal RNA transcription by RNA polymerase I. Part of the small subunit (SSU) processome, first precursor of the small eukaryotic ribosomal subunit. During the assembly of the SSU processome in the nucleolus, many ribosome biogenesis factors, an RNA chaperone and ribosomal proteins associate with the nascent pre-rRNA and work in concert to generate RNA folding, modifications, rearrangements and cleavage as well as targeted degradation of pre-ribosomal RNA by the RNA exosome. The polypeptide is U3 small nucleolar RNA-associated protein 15 homolog (Homo sapiens (Human)).